The following is a 382-amino-acid chain: Lipid-A-disaccharide synthase (382 aa).

Belongs to the LpxB family.

It carries out the reaction a lipid X + a UDP-2-N,3-O-bis[(3R)-3-hydroxyacyl]-alpha-D-glucosamine = a lipid A disaccharide + UDP + H(+). The protein operates within bacterial outer membrane biogenesis; LPS lipid A biosynthesis. In terms of biological role, condensation of UDP-2,3-diacylglucosamine and 2,3-diacylglucosamine-1-phosphate to form lipid A disaccharide, a precursor of lipid A, a phosphorylated glycolipid that anchors the lipopolysaccharide to the outer membrane of the cell. This chain is Lipid-A-disaccharide synthase, found in Dechloromonas aromatica (strain RCB).